The primary structure comprises 912 residues: Lateral signaling target protein 2 homolog (912 aa).

Positions 323–332 (NVNTSNNSDN) are enriched in low complexity. Disordered stretches follow at residues 323–360 (NVNT…SSFY), 455–610 (ADSG…ESSQ), 664–745 (NSSP…ASSA), and 769–846 (GGGS…APPR). The segment covering 333-355 (SDSRVDDSPNDELRHESETRDNR) has biased composition (basic and acidic residues). The span at 455-468 (ADSGLGTANPSVDN) shows a compositional bias: polar residues. Positions 486–505 (SSEEGEIDEYDNEEDDEDSD) are enriched in acidic residues. Positions 530-544 (YRTHKQQHHHRHRRS) are enriched in basic residues. Polar residues-rich tracts occupy residues 545–556 (SGSIMSATSSRK) and 572–590 (VPSN…DTSP). Positions 591 to 610 (SSGNQSECSSTSSTTGESSQ) are enriched in low complexity. Over residues 682–699 (DKPKEPDPTDLFEFRASE) the composition is skewed to basic and acidic residues. Composition is skewed to polar residues over residues 705–717 (PGQN…QSIY), 735–745 (PGTSPIRASSA), 780–801 (ERSV…ATDS), and 822–834 (SRSS…NGTS). The FYVE-type zinc finger occupies 850–910 (DGDAPRCMAC…VCRDCYVREV (61 aa)). Residues Cys856, Cys859, Cys872, Cys875, Cys880, Cys883, Cys902, and Cys905 each contribute to the Zn(2+) site.

The protein belongs to the lst-2 family.

Its function is as follows. Negative regulator of epidermal growth factor receptor (EGFR) signaling. This chain is Lateral signaling target protein 2 homolog, found in Aedes aegypti (Yellowfever mosquito).